A 362-amino-acid chain; its full sequence is MTSSPTSTQESSTSWYLLLQQLIDGESLSRSQAAELMQGWLSEAVPPELSGAILTALNFKGVSADELTGMAEVLQSQSKMGTGENYSQLPITNSPFSIIDTCGTGGDGSSTFNISTAVAFVAAAYGVPVAKHGNRSASSLTGSADVLEALGVNLGASPEKVQAALQEVGITFLFAPGWHPALKAVATLRRTLRIRTVFNLLGPLVNPLRPTGQVVGLFTPKLLTTVAQALDNLGKQKAIVLHGRERLDEAGLGDLTDLAVLSDGELQLTTINPQEVGVTPAPIGALRGGDVQENAEILKAVLQGKGTQAQQDAVALNAALALQVAGAVPLLDHAQGVSVAKEILQTGTAWAKLAQLVYFLGN.

Residues Gly103, Gly106 to Asp107, Thr111, Asn113 to Thr116, Lys131 to Ser139, and Ser143 each bind 5-phospho-alpha-D-ribose 1-diphosphate. Gly103 serves as a coordination point for anthranilate. Ser115 lines the Mg(2+) pocket. Anthranilate is bound at residue Asn134. An anthranilate-binding site is contributed by Arg189. Mg(2+) contacts are provided by Asp248 and Glu249.

This sequence belongs to the anthranilate phosphoribosyltransferase family. As to quaternary structure, homodimer. Mg(2+) serves as cofactor.

It carries out the reaction N-(5-phospho-beta-D-ribosyl)anthranilate + diphosphate = 5-phospho-alpha-D-ribose 1-diphosphate + anthranilate. It functions in the pathway amino-acid biosynthesis; L-tryptophan biosynthesis; L-tryptophan from chorismate: step 2/5. Functionally, catalyzes the transfer of the phosphoribosyl group of 5-phosphorylribose-1-pyrophosphate (PRPP) to anthranilate to yield N-(5'-phosphoribosyl)-anthranilate (PRA). In Nostoc sp. (strain PCC 7120 / SAG 25.82 / UTEX 2576), this protein is Anthranilate phosphoribosyltransferase 2.